The chain runs to 268 residues: Glutamate 5-kinase (268 aa).

K15 is an ATP binding site. Substrate is bound by residues S55, D142, and N158. 178 to 179 (SD) is an ATP binding site.

It belongs to the glutamate 5-kinase family.

The protein localises to the cytoplasm. The enzyme catalyses L-glutamate + ATP = L-glutamyl 5-phosphate + ADP. It participates in amino-acid biosynthesis; L-proline biosynthesis; L-glutamate 5-semialdehyde from L-glutamate: step 1/2. In terms of biological role, catalyzes the transfer of a phosphate group to glutamate to form L-glutamate 5-phosphate. The sequence is that of Glutamate 5-kinase from Oenococcus oeni (strain ATCC BAA-331 / PSU-1).